The chain runs to 1533 residues: Glycogen debranching enzyme (1533 aa).

Ser64 carries the phosphoserine modification. Catalysis depends on residues Asp527, His530, and Asp628.

It belongs to the glycogen debranching enzyme family. In terms of assembly, monomer. Interacts with NHLRC1/malin. In terms of processing, ubiquitinated. Ubiquitous. Expressed in striated skeletal muscle, heart, liver, spleen, skin, spinal cord, lung, kidney and testicle.

It is found in the cytoplasm. It carries out the reaction Transfers a segment of a (1-&gt;4)-alpha-D-glucan to a new position in an acceptor, which may be glucose or a (1-&gt;4)-alpha-D-glucan.. The catalysed reaction is Hydrolysis of (1-&gt;6)-alpha-D-glucosidic branch linkages in glycogen phosphorylase limit dextrin.. Its function is as follows. Multifunctional enzyme acting as 1,4-alpha-D-glucan:1,4-alpha-D-glucan 4-alpha-D-glycosyltransferase and amylo-1,6-glucosidase in glycogen degradation. This is Glycogen debranching enzyme from Equus caballus (Horse).